A 486-amino-acid chain; its full sequence is Heme A synthase COX15 (486 aa).

The transit peptide at 1 to 33 (MLFRNIEVGRQAAKLLTRTSSRLAWQSIGASRN) directs the protein to the mitochondrion. The Mitochondrial matrix segment spans residues 34–85 (ISTIRQQIRKTQLYNFKKTVSIRPFSLSSPVFKPHVASESNPIESRLKTSKN). Residues 86-106 (VAYWLIGTSGLVFGIVVLGGL) traverse the membrane as a helical segment. Residues 107-170 (TRLTESGLSI…FIFFMEWIHR (64 aa)) are Mitochondrial intermembrane-facing. His-169 serves as a coordination point for heme o. A helical membrane pass occupies residues 171–191 (LWGRAIGAVFILPAVYFAVSK). Residues 192 to 200 (KTSGHVNKR) are Mitochondrial matrix-facing. The chain crosses the membrane as a helical span at residues 201 to 221 (LFGLAGLLGLQGFVGWWMVKS). Topologically, residues 222-243 (GLDQEQLDARKSKPTVSQYRLT) are mitochondrial intermembrane. A helical transmembrane segment spans residues 244–264 (THLGTAFFLYMGMLWTGLEIL). His-245 provides a ligand contact to heme o. The Mitochondrial matrix portion of the chain corresponds to 265-293 (RECKWIKNPVQAISLFKKLDNPAIGPMRK). A helical membrane pass occupies residues 294–314 (ISLALLAVSFLTAMSGGMVAG). Topologically, residues 315–364 (LDAGWVYNTWPKMGERWFPSSRELMDENFCRREDKKDLWWRNLLENPVTV) are mitochondrial intermembrane. Residues 365 to 387 (QLVHRTCAYVAFTSVLAAHMYAI) form a helical membrane-spanning segment. His-368 contacts heme b. The Mitochondrial matrix portion of the chain corresponds to 388–402 (KKKAVIPRNAMTSLH). Residues 403–423 (VMMGVVTLQATLGILTILYLV) form a helical membrane-spanning segment. Position 424 (Pro-424) is a topological domain, mitochondrial intermembrane. The helical transmembrane segment at 425–445 (ISLASIHQAGALALLTSSLVF) threads the bilayer. A heme b-binding site is contributed by His-431. At 446–486 (ASQLRKPRAPMRNVIITLPHSSKVTSGKILSEASKLASKPL) the chain is on the mitochondrial matrix side.

The protein belongs to the COX15/CtaA family. Type 2 subfamily. Forms 200-350 kDa oligomeric complexes independent on heme binding. In addition to form homooligomeric complexes, a portion also associates with the mitochondrial respiratory supercomplexes. Interacts with CcO assembly factors PET117, SHY1, COA3 and COA1, CcO subunit COX13 and cytochrome b-c1 subunit COR1. It depends on heme b as a cofactor.

It is found in the mitochondrion inner membrane. It carries out the reaction Fe(II)-heme o + 2 A + H2O = Fe(II)-heme a + 2 AH2. The protein operates within porphyrin-containing compound metabolism; heme A biosynthesis; heme A from heme O: step 1/1. Functionally, catalyzes the second reaction in the biosynthesis of heme A, a prosthetic group of mitochondrial cytochrome c oxidase (CcO). Heme A is synthesized from heme B by two sequential enzymatic reactions catalyzed by heme O synthase (HOS/COX10) and heme A synthase (HAS/COX15). HAS catalyzes the conversion of heme O to heme A by two successive hydroxylations of the methyl group at C8, in a reaction that involves matrix ferredoxin YAH1 and ferredoxin reductase ARH1. The first hydroxylation forms heme I, the second hydroxylation results in an unstable dihydroxymethyl group, which spontaneously dehydrates, resulting in the formyl group of heme A. May also play a secondary role in CcO assembly. Plays a role in the maturation of COX1, the heme A-containing structural CcO subunit, possibly by interacting with the COX1-containing sub-assembly complexes that form prior to heme A insertion. May also positively regulate the upstream enzymatic reaction, farnesylation of heme B by HOS/COX10. The protein is Heme A synthase COX15 of Saccharomyces cerevisiae (strain ATCC 204508 / S288c) (Baker's yeast).